The following is a 171-amino-acid chain: Small ribosomal subunit protein uS5 (171 aa).

One can recognise an S5 DRBM domain in the interval tyrosine 15–isoleucine 78.

Belongs to the universal ribosomal protein uS5 family. Part of the 30S ribosomal subunit. Contacts proteins S4 and S8.

In terms of biological role, with S4 and S12 plays an important role in translational accuracy. Its function is as follows. Located at the back of the 30S subunit body where it stabilizes the conformation of the head with respect to the body. The chain is Small ribosomal subunit protein uS5 from Phytoplasma australiense.